We begin with the raw amino-acid sequence, 158 residues long: 6,7-dimethyl-8-ribityllumazine synthase (158 aa).

5-amino-6-(D-ribitylamino)uracil-binding positions include phenylalanine 23, 61 to 63 (SFE), and 85 to 87 (AVI). Position 90–91 (90–91 (ET)) interacts with (2S)-2-hydroxy-3-oxobutyl phosphate. Histidine 93 (proton donor) is an active-site residue. Phenylalanine 118 contacts 5-amino-6-(D-ribitylamino)uracil. Arginine 132 contacts (2S)-2-hydroxy-3-oxobutyl phosphate.

It belongs to the DMRL synthase family.

The enzyme catalyses (2S)-2-hydroxy-3-oxobutyl phosphate + 5-amino-6-(D-ribitylamino)uracil = 6,7-dimethyl-8-(1-D-ribityl)lumazine + phosphate + 2 H2O + H(+). The protein operates within cofactor biosynthesis; riboflavin biosynthesis; riboflavin from 2-hydroxy-3-oxobutyl phosphate and 5-amino-6-(D-ribitylamino)uracil: step 1/2. Functionally, catalyzes the formation of 6,7-dimethyl-8-ribityllumazine by condensation of 5-amino-6-(D-ribitylamino)uracil with 3,4-dihydroxy-2-butanone 4-phosphate. This is the penultimate step in the biosynthesis of riboflavin. This chain is 6,7-dimethyl-8-ribityllumazine synthase, found in Prochlorococcus marinus (strain MIT 9312).